A 509-amino-acid polypeptide reads, in one-letter code: Maturase K (509 aa).

The protein belongs to the intron maturase 2 family. MatK subfamily.

It is found in the plastid. The protein resides in the chloroplast. Functionally, usually encoded in the trnK tRNA gene intron. Probably assists in splicing its own and other chloroplast group II introns. The protein is Maturase K of Nicotiana glutinosa (Tobacco).